A 171-amino-acid polypeptide reads, in one-letter code: MVLGQPINIIKWIEENGDLLKPPVNNFCLHRGGFTIMIVGGPNERSDYHINQTPEYFYQFKGTMCLKVVDDGEFKDIFINEGDSFLLPPNVPHNPCRYENTIGIVVEQDRPAGVNDKVRWYCQKCQTVIHEVEFYLTDLGTQIKEAIVKFDADLDARTCKNCGTVNSSRRD.

R45 provides a ligand contact to O2. 3 residues coordinate Fe cation: H49, E55, and H93. E55 is a substrate binding site. 2 residues coordinate substrate: R97 and E107. Residues C122, C125, C159, and C162 each contribute to the a divalent metal cation site.

The protein belongs to the 3-HAO family. The cofactor is Fe(2+).

The protein localises to the cytoplasm. It carries out the reaction 3-hydroxyanthranilate + O2 = (2Z,4Z)-2-amino-3-carboxymuconate 6-semialdehyde. It participates in cofactor biosynthesis; NAD(+) biosynthesis; quinolinate from L-kynurenine: step 3/3. Catalyzes the oxidative ring opening of 3-hydroxyanthranilate to 2-amino-3-carboxymuconate semialdehyde, which spontaneously cyclizes to quinolinate. This is 3-hydroxyanthranilate 3,4-dioxygenase from Candida albicans (strain SC5314 / ATCC MYA-2876) (Yeast).